Consider the following 420-residue polypeptide: Methanogen homoaconitase large subunit (420 aa).

[4Fe-4S] cluster-binding residues include cysteine 302, cysteine 362, and cysteine 365.

The protein belongs to the aconitase/IPM isomerase family. LeuC type 2 subfamily. As to quaternary structure, heterotetramer of 2 HacA and 2 HacB proteins. [4Fe-4S] cluster serves as cofactor.

It catalyses the reaction (2R)-homocitrate = (2R,3S)-homoisocitrate. It carries out the reaction (2R)-homocitrate = cis-homoaconitate + H2O. The enzyme catalyses (2R,3S)-homoisocitrate = cis-homoaconitate + H2O. The catalysed reaction is cis-(homo)2aconitate + H2O = (2R,3S)-iso(homo)2citrate. It catalyses the reaction cis-(homo)3aconitate + H2O = (2R,3S)-iso(homo)3citrate. It carries out the reaction (R)-malate = maleate + H2O. The enzyme catalyses cis-aconitate + H2O = D-threo-isocitrate. It functions in the pathway organic acid metabolism; 2-oxosuberate biosynthesis. Functionally, component of a hydro-lyase with broad substrate specificity for cis-unsaturated tricarboxylic acids. Catalyzes both the reversible dehydration of (R)-homocitrate ((R)-2-hydroxybutane-1,2,4-tricarboxylate) to produce cis-homoaconitate ((Z)-but-1-ene-1,2,4-tricarboxylate), and its hydration to homoisocitrate ((1R,2S)-1-hydroxybutane-1,2,4-tricarboxylate). Is also able to hydrate the analogous longer chain substrates cis-homo(2)-aconitate, cis-homo(3)-aconitate, and even the non-physiological cis-homo(4)-aconitate with similar efficiency. These reactions are part of the biosynthesis pathway of coenzyme B. Can also catalyze the hydration of maleate to (R)-malate, and that of cis-aconitate. Cannot catalyze the hydration of citraconate and the dehydration of (S)-homocitrate, citramalate, 2-isopropylmalate, 3-isopropylmalate, citrate or threo-DL-isocitrate. This Methanocaldococcus jannaschii (strain ATCC 43067 / DSM 2661 / JAL-1 / JCM 10045 / NBRC 100440) (Methanococcus jannaschii) protein is Methanogen homoaconitase large subunit (hacA).